A 189-amino-acid polypeptide reads, in one-letter code: Large ribosomal subunit protein eL19A (189 aa).

Residue Lys21 forms a Glycyl lysine isopeptide (Lys-Gly) (interchain with G-Cter in ubiquitin) linkage. Residues Ser30 and Ser37 each carry the phosphoserine modification. Residues Lys53 and Lys60 each participate in a glycyl lysine isopeptide (Lys-Gly) (interchain with G-Cter in ubiquitin) cross-link. Residues 58 to 85 form a disordered region; that stretch reads HSKSRTRAHAQSKREGRHSGYGKRKGTR. Over residues 59-68 the composition is skewed to basic residues; that stretch reads SKSRTRAHAQ. Ser91 is subject to Phosphoserine. Glycyl lysine isopeptide (Lys-Gly) (interchain with G-Cter in ubiquitin) cross-links involve residues Lys146 and Lys186. Positions 164–189 are disordered; that stretch reads LKNRAARDRRAQRVAEKRDALLKEDA.

Belongs to the eukaryotic ribosomal protein eL19 family. As to quaternary structure, component of the large ribosomal subunit (LSU). Mature yeast ribosomes consist of a small (40S) and a large (60S) subunit. The 40S small subunit contains 1 molecule of ribosomal RNA (18S rRNA) and 33 different proteins (encoded by 57 genes). The large 60S subunit contains 3 rRNA molecules (25S, 5.8S and 5S rRNA) and 46 different proteins (encoded by 81 genes). eL19 lies in close proximity to the binding site for eukaryotic initiation factor eIF4G.

It localises to the cytoplasm. Its function is as follows. Component of the ribosome, a large ribonucleoprotein complex responsible for the synthesis of proteins in the cell. The small ribosomal subunit (SSU) binds messenger RNAs (mRNAs) and translates the encoded message by selecting cognate aminoacyl-transfer RNA (tRNA) molecules. The large subunit (LSU) contains the ribosomal catalytic site termed the peptidyl transferase center (PTC), which catalyzes the formation of peptide bonds, thereby polymerizing the amino acids delivered by tRNAs into a polypeptide chain. The nascent polypeptides leave the ribosome through a tunnel in the LSU and interact with protein factors that function in enzymatic processing, targeting, and the membrane insertion of nascent chains at the exit of the ribosomal tunnel. eL19 may play a role in the last stages of translation initiation, in particular subunit joining and shedding/releasing factors. In Saccharomyces cerevisiae (strain ATCC 204508 / S288c) (Baker's yeast), this protein is Large ribosomal subunit protein eL19A.